The primary structure comprises 85 residues: Large ribosomal subunit protein bL27 (85 aa).

A disordered region spans residues 1–24; it reads MAHKKAGGSSRNGRDSHSKRLGVK.

This sequence belongs to the bacterial ribosomal protein bL27 family.

In Nitrosomonas eutropha (strain DSM 101675 / C91 / Nm57), this protein is Large ribosomal subunit protein bL27.